The following is a 301-amino-acid chain: MKIGILSRKRELYSTNSLVEACNARGHEVRVINPLRCYMNITSHNPSILYKGEKLEGFDAIIPRIGASITFYGCAVVRQFEMMGVYCVNESVAITRSRDKLRSLQLLARKGIGLPVTAFAHSTQYTEDLIDIVGGAPLVIKLLEGTQGKGVVLAETRNTAASIIEAFKGLEANILVQEFISEASGSDIRCLVVGGKVIASMKRQGREGDFRSNLHQGGSATQVRITPEERSTAVRSAKIMGLGFCGVDILRSNHGPVVMEVNSSPGLEGIEKTTDIDVAGQLIDYIEKNAQPGKTKTKGKG.

Positions 104 to 287 (LQLLARKGIG…VAGQLIDYIE (184 aa)) constitute an ATP-grasp domain. ATP contacts are provided by residues Lys-141, 178–179 (EF), Asp-187, and 211–213 (RSN). 3 residues coordinate Mg(2+): Asp-248, Glu-260, and Asn-262. Residues Asp-248, Glu-260, and Asn-262 each coordinate Mn(2+).

Belongs to the RimK family. Requires Mg(2+) as cofactor. It depends on Mn(2+) as a cofactor.

The polypeptide is Probable alpha-L-glutamate ligase (Maridesulfovibrio salexigens (strain ATCC 14822 / DSM 2638 / NCIMB 8403 / VKM B-1763) (Desulfovibrio salexigens)).